The sequence spans 563 residues: Arginine--tRNA ligase (563 aa).

A 'HIGH' region motif is present at residues 121–131 (PNIAKPFSIGH).

The protein belongs to the class-I aminoacyl-tRNA synthetase family. Monomer.

Its subcellular location is the cytoplasm. It catalyses the reaction tRNA(Arg) + L-arginine + ATP = L-arginyl-tRNA(Arg) + AMP + diphosphate. In Streptococcus pyogenes serotype M12 (strain MGAS2096), this protein is Arginine--tRNA ligase.